Reading from the N-terminus, the 150-residue chain is Large ribosomal subunit protein uL15 (150 aa).

The tract at residues 1–55 (MADNEILQMHDLKPAPGAKKDRTRVGRGEGSKGKTAGRGAKGQTKRNHVRPGFEG) is disordered. The span at 8 to 32 (QMHDLKPAPGAKKDRTRVGRGEGSK) shows a compositional bias: basic and acidic residues.

Belongs to the universal ribosomal protein uL15 family. As to quaternary structure, part of the 50S ribosomal subunit.

Functionally, binds to the 23S rRNA. In Bifidobacterium longum (strain DJO10A), this protein is Large ribosomal subunit protein uL15.